A 350-amino-acid polypeptide reads, in one-letter code: Flap endonuclease 1 (350 aa).

Residues 1 to 102 are N-domain; the sequence is MGVNLKDLIP…KEIEKRRKIR (102 aa). Mg(2+) contacts are provided by D31, D84, E156, E158, D177, D179, and D240. Positions 120-262 are I-domain; sequence AARRYAMMSA…KALQLVKAYK (143 aa). An interaction with PCNA region spans residues 341-349; sequence KQLGLEAWF.

Belongs to the XPG/RAD2 endonuclease family. FEN1 subfamily. In terms of assembly, interacts with PCNA. PCNA stimulates the nuclease activity without altering cleavage specificity. Mg(2+) serves as cofactor.

Its function is as follows. Structure-specific nuclease with 5'-flap endonuclease and 5'-3' exonuclease activities involved in DNA replication and repair. During DNA replication, cleaves the 5'-overhanging flap structure that is generated by displacement synthesis when DNA polymerase encounters the 5'-end of a downstream Okazaki fragment. Binds the unpaired 3'-DNA end and kinks the DNA to facilitate 5' cleavage specificity. Cleaves one nucleotide into the double-stranded DNA from the junction in flap DNA, leaving a nick for ligation. Also involved in the base excision repair (BER) pathway. Acts as a genome stabilization factor that prevents flaps from equilibrating into structures that lead to duplications and deletions. Also possesses 5'-3' exonuclease activity on nicked or gapped double-stranded DNA. The polypeptide is Flap endonuclease 1 (Staphylothermus marinus (strain ATCC 43588 / DSM 3639 / JCM 9404 / F1)).